The following is a 742-amino-acid chain: MAKKDSVLEAGWSVMEAGVAKLQKILEEVPDEPPFDPVQRMQLYTTVHNLCTQKPPNDYSQQIYDRYGGVYVDYNKQTVLPAIREKHGEYMLRELVKRWANQKILVRWLSHFFEYLDRFYTRRGSHPTLSAVGFISFRDLVYQELQSKAKDAVLALIHKEREGEQIDRALLKNVIDVYCGNGMGELVKYEEDFESFLLEDSASYYSRNASRWNQENSCPDYMIKAEESLRLEKERVTNYLHSTTEPKLVAKVQNELLVVVAKQLIENEHSGCRALLRDDKMDDLARMYRLYHPIPQGLDPVADLFKQHITVEGSALIKQATEAATDKAASTSGLKVQDQVLIRQLIDLHDKFMVYVDECFQKHSLFHKALKEAFEVFCNKTVAGVSSAEILATYCDNILKTGGGIEKLENEDLELTLEKVVKLLVYISDKDLFAEFFRKKQARRLLFDRNGNDYHERSLLTKFKELLGAQFTSKMEGMLTDMTLAKEHQTNFVEFLSVNKTKKLGMDFTVTVLTTGFWPSYKTTDLNLPIEMVNCVEAFKAYYGTKTNSRRLSWIYSLGTCQLAGKFDKKTIEIVVTTYQAAVLLLFNNTERLSYTEILEQLNLGHEDLARLLHSLSCLKYKILIKEPMSRNISNTDTFEFNSKFTDKMRRIRVPLPPMDERKKIVEDVDKDRRYAIDAALVRIMKSRKVLGHQQLVSECVEHLSKMFKPDIKMIKKRIEDLISRDYLERDTDNPNTFKYLA.

In terms of domain architecture, Cullin neddylation spans 672-734; the sequence is DRRYAIDAAL…RDYLERDTDN (63 aa). A Glycyl lysine isopeptide (Lys-Gly) (interchain with G-Cter in NEDD8) cross-link involves residue K686.

Belongs to the cullin family. As to quaternary structure, interacts with SKIP17 and FBW2/SKIP18. Neddylated; which enhances the ubiquitination activity of E3 ubiquitin-protein ligase complexes.

In terms of biological role, core component of multiple SCF (SKP1-CUL1-F-box protein) E3 ubiquitin-protein ligase complexes. Involved in ubiquitination and subsequent proteasomal degradation of target proteins. This is Cullin-2 (CUL2) from Arabidopsis thaliana (Mouse-ear cress).